Here is a 241-residue protein sequence, read N- to C-terminus: tRNA (guanine-N(7)-)-methyltransferase (241 aa).

Residues 1 to 10 (MTESNDTPIQ) are compositionally biased toward polar residues. Residues 1–20 (MTESNDTPIQTEEGDERQHR) are disordered. The S-adenosyl-L-methionine site is built by Glu-71, Glu-96, Asp-123, and Asp-146. The active site involves Asp-146. Substrate is bound by residues Lys-150, Asp-182, and 219–222 (TKFE).

The protein belongs to the class I-like SAM-binding methyltransferase superfamily. TrmB family.

It carries out the reaction guanosine(46) in tRNA + S-adenosyl-L-methionine = N(7)-methylguanosine(46) in tRNA + S-adenosyl-L-homocysteine. It functions in the pathway tRNA modification; N(7)-methylguanine-tRNA biosynthesis. Its function is as follows. Catalyzes the formation of N(7)-methylguanine at position 46 (m7G46) in tRNA. The protein is tRNA (guanine-N(7)-)-methyltransferase of Pseudomonas fluorescens (strain Pf0-1).